We begin with the raw amino-acid sequence, 71 residues long: Large ribosomal subunit protein bL31 (71 aa).

The Zn(2+) site is built by C16, C18, C36, and C39.

The protein belongs to the bacterial ribosomal protein bL31 family. Type A subfamily. Part of the 50S ribosomal subunit. The cofactor is Zn(2+).

In terms of biological role, binds the 23S rRNA. This Thermotoga maritima (strain ATCC 43589 / DSM 3109 / JCM 10099 / NBRC 100826 / MSB8) protein is Large ribosomal subunit protein bL31.